A 163-amino-acid chain; its full sequence is 6,7-dimethyl-8-ribityllumazine synthase (163 aa).

5-amino-6-(D-ribitylamino)uracil contacts are provided by residues Phe27, 58–60 (ALE), and 87–89 (CVV). (2S)-2-hydroxy-3-oxobutyl phosphate is bound at residue 92–93 (DT). His95 acts as the Proton donor in catalysis. Asn120 contributes to the 5-amino-6-(D-ribitylamino)uracil binding site. Arg134 serves as a coordination point for (2S)-2-hydroxy-3-oxobutyl phosphate.

The protein belongs to the DMRL synthase family.

It catalyses the reaction (2S)-2-hydroxy-3-oxobutyl phosphate + 5-amino-6-(D-ribitylamino)uracil = 6,7-dimethyl-8-(1-D-ribityl)lumazine + phosphate + 2 H2O + H(+). The protein operates within cofactor biosynthesis; riboflavin biosynthesis; riboflavin from 2-hydroxy-3-oxobutyl phosphate and 5-amino-6-(D-ribitylamino)uracil: step 1/2. In terms of biological role, catalyzes the formation of 6,7-dimethyl-8-ribityllumazine by condensation of 5-amino-6-(D-ribitylamino)uracil with 3,4-dihydroxy-2-butanone 4-phosphate. This is the penultimate step in the biosynthesis of riboflavin. In Rhodopseudomonas palustris (strain BisA53), this protein is 6,7-dimethyl-8-ribityllumazine synthase.